The following is a 274-amino-acid chain: Diaminopimelate epimerase (274 aa).

Substrate is bound by residues asparagine 11, glutamine 44, and asparagine 64. The Proton donor role is filled by cysteine 73. Residues 74–75, asparagine 157, asparagine 190, and 208–209 each bind substrate; these read GN and ER. Catalysis depends on cysteine 217, which acts as the Proton acceptor. Residue 218–219 participates in substrate binding; that stretch reads GS.

It belongs to the diaminopimelate epimerase family. In terms of assembly, homodimer.

It is found in the cytoplasm. The catalysed reaction is (2S,6S)-2,6-diaminopimelate = meso-2,6-diaminopimelate. It functions in the pathway amino-acid biosynthesis; L-lysine biosynthesis via DAP pathway; DL-2,6-diaminopimelate from LL-2,6-diaminopimelate: step 1/1. In terms of biological role, catalyzes the stereoinversion of LL-2,6-diaminopimelate (L,L-DAP) to meso-diaminopimelate (meso-DAP), a precursor of L-lysine and an essential component of the bacterial peptidoglycan. The sequence is that of Diaminopimelate epimerase from Escherichia coli O6:H1 (strain CFT073 / ATCC 700928 / UPEC).